The chain runs to 225 residues: 3-dehydroquinate dehydratase (225 aa).

3-dehydroquinate contacts are provided by residues Ser-6, 30–32 (EWR), and Arg-62. Residue His-118 is the Proton donor/acceptor of the active site. The active-site Schiff-base intermediate with substrate is Lys-143. 3 residues coordinate 3-dehydroquinate: Arg-186, Ser-205, and Gln-209.

Belongs to the type-I 3-dehydroquinase family. In terms of assembly, homodimer.

The catalysed reaction is 3-dehydroquinate = 3-dehydroshikimate + H2O. Its pathway is metabolic intermediate biosynthesis; chorismate biosynthesis; chorismate from D-erythrose 4-phosphate and phosphoenolpyruvate: step 3/7. In terms of biological role, involved in the third step of the chorismate pathway, which leads to the biosynthesis of aromatic amino acids. Catalyzes the cis-dehydration of 3-dehydroquinate (DHQ) and introduces the first double bond of the aromatic ring to yield 3-dehydroshikimate. The sequence is that of 3-dehydroquinate dehydratase from Streptococcus pneumoniae (strain P1031).